The chain runs to 290 residues: 4-hydroxybenzoate octaprenyltransferase (290 aa).

The next 8 helical transmembrane spans lie at 23–43 (IGAL…TPGV), 46–66 (LWIM…GCVV), 99–119 (LFVV…TMTI), 141–161 (LPQV…FAAV), 163–183 (ESVP…AVAY), 213–233 (LIIG…GELN), 234–254 (GLGW…VYQQ), and 268–288 (AFMN…MSYW).

The protein belongs to the UbiA prenyltransferase family. Requires Mg(2+) as cofactor.

It localises to the cell inner membrane. The catalysed reaction is all-trans-octaprenyl diphosphate + 4-hydroxybenzoate = 4-hydroxy-3-(all-trans-octaprenyl)benzoate + diphosphate. Its pathway is cofactor biosynthesis; ubiquinone biosynthesis. In terms of biological role, catalyzes the prenylation of para-hydroxybenzoate (PHB) with an all-trans polyprenyl group. Mediates the second step in the final reaction sequence of ubiquinone-8 (UQ-8) biosynthesis, which is the condensation of the polyisoprenoid side chain with PHB, generating the first membrane-bound Q intermediate 3-octaprenyl-4-hydroxybenzoate. This Shigella flexneri protein is 4-hydroxybenzoate octaprenyltransferase.